The following is a 67-amino-acid chain: Large ribosomal subunit protein bL35 (67 aa).

Belongs to the bacterial ribosomal protein bL35 family.

The sequence is that of Large ribosomal subunit protein bL35 from Synechocystis sp. (strain ATCC 27184 / PCC 6803 / Kazusa).